Reading from the N-terminus, the 187-residue chain is Putative manganese efflux pump MntP (187 aa).

A run of 6 helical transmembrane segments spans residues 3–23, 39–59, 65–85, 103–123, 124–144, and 166–186; these read WLTI…VALA, LGFH…LLGM, ISAY…GRMV, GMTM…VGLS, IAML…VAGV, and ICGG…HTLL.

This sequence belongs to the MntP (TC 9.B.29) family.

The protein localises to the cell inner membrane. Functionally, probably functions as a manganese efflux pump. This Geobacter sp. (strain M21) protein is Putative manganese efflux pump MntP.